Consider the following 396-residue polypeptide: Phosphoglycerate kinase (396 aa).

Substrate contacts are provided by residues 19–21 (DFN), Arg34, 57–60 (HLGK), Arg116, and Arg153. Residues Lys204, Glu324, and 351–354 (GGDT) contribute to the ATP site.

Belongs to the phosphoglycerate kinase family. As to quaternary structure, monomer.

The protein localises to the cytoplasm. It carries out the reaction (2R)-3-phosphoglycerate + ATP = (2R)-3-phospho-glyceroyl phosphate + ADP. It participates in carbohydrate degradation; glycolysis; pyruvate from D-glyceraldehyde 3-phosphate: step 2/5. This chain is Phosphoglycerate kinase, found in Maridesulfovibrio salexigens (strain ATCC 14822 / DSM 2638 / NCIMB 8403 / VKM B-1763) (Desulfovibrio salexigens).